The chain runs to 306 residues: TnpB-like protein aq_aa05 (306 aa).

4 residues coordinate Zn(2+): cysteine 213, cysteine 216, cysteine 234, and cysteine 237.

It belongs to the transposase 35 family.

This is TnpB-like protein aq_aa05 from Aquifex aeolicus (strain VF5).